The primary structure comprises 282 residues: NADPH-dependent 7-cyano-7-deazaguanine reductase (282 aa).

88–90 (IES) provides a ligand contact to substrate. An NADPH-binding site is contributed by 90 to 91 (SK). Residue cysteine 190 is the Thioimide intermediate of the active site. Aspartate 197 functions as the Proton donor in the catalytic mechanism. A substrate-binding site is contributed by 229-230 (HE). 258 to 259 (RG) lines the NADPH pocket.

This sequence belongs to the GTP cyclohydrolase I family. QueF type 2 subfamily. As to quaternary structure, homodimer.

The protein localises to the cytoplasm. It carries out the reaction 7-aminomethyl-7-carbaguanine + 2 NADP(+) = 7-cyano-7-deazaguanine + 2 NADPH + 3 H(+). Its pathway is tRNA modification; tRNA-queuosine biosynthesis. Catalyzes the NADPH-dependent reduction of 7-cyano-7-deazaguanine (preQ0) to 7-aminomethyl-7-deazaguanine (preQ1). In Salmonella paratyphi B (strain ATCC BAA-1250 / SPB7), this protein is NADPH-dependent 7-cyano-7-deazaguanine reductase.